A 269-amino-acid polypeptide reads, in one-letter code: Shikimate dehydrogenase (NADP(+)) (269 aa).

Shikimate-binding positions include 14 to 16 and T61; that span reads SKS. K65 serves as the catalytic Proton acceptor. Position 77 (E77) interacts with NADP(+). Residues N86 and D102 each contribute to the shikimate site. NADP(+)-binding positions include 126 to 130, 150 to 155, and M213; these read GAGGA and NRTYEK. Residue Y215 participates in shikimate binding. Residue G237 participates in NADP(+) binding.

Belongs to the shikimate dehydrogenase family. As to quaternary structure, homodimer.

It carries out the reaction shikimate + NADP(+) = 3-dehydroshikimate + NADPH + H(+). It functions in the pathway metabolic intermediate biosynthesis; chorismate biosynthesis; chorismate from D-erythrose 4-phosphate and phosphoenolpyruvate: step 4/7. Functionally, involved in the biosynthesis of the chorismate, which leads to the biosynthesis of aromatic amino acids. Catalyzes the reversible NADPH linked reduction of 3-dehydroshikimate (DHSA) to yield shikimate (SA). The sequence is that of Shikimate dehydrogenase (NADP(+)) from Aliivibrio fischeri (strain ATCC 700601 / ES114) (Vibrio fischeri).